Reading from the N-terminus, the 402-residue chain is Phosphoglycerate kinase (402 aa).

Substrate-binding positions include 24–26, Arg39, 62–65, Arg121, and Arg161; these read DLN and HLGR. ATP-binding positions include Lys211, Gly299, Glu330, and 359 to 362; that span reads GGDS.

The protein belongs to the phosphoglycerate kinase family. As to quaternary structure, monomer.

Its subcellular location is the cytoplasm. The enzyme catalyses (2R)-3-phosphoglycerate + ATP = (2R)-3-phospho-glyceroyl phosphate + ADP. Its pathway is carbohydrate degradation; glycolysis; pyruvate from D-glyceraldehyde 3-phosphate: step 2/5. In Mycolicibacterium gilvum (strain PYR-GCK) (Mycobacterium gilvum (strain PYR-GCK)), this protein is Phosphoglycerate kinase.